The following is a 252-amino-acid chain: UPF0273 protein MK0039 (252 aa).

One can recognise a KaiC domain in the interval 4-248 (ERVSTGIPGM…VFVKERGEVR (245 aa)). 31–38 (GGPGTGKT) provides a ligand contact to ATP.

It belongs to the UPF0273 family.

This is UPF0273 protein MK0039 from Methanopyrus kandleri (strain AV19 / DSM 6324 / JCM 9639 / NBRC 100938).